A 772-amino-acid polypeptide reads, in one-letter code: Elongin-A (772 aa).

A TFIIS N-terminal domain is found at 4–79 (ESALQVVEKL…AQWKKLVPVE (76 aa)). 2 stretches are compositionally biased toward basic and acidic residues: residues 79 to 105 (ERNAEPDEQDFEKSNSRKRPRDALQKE) and 136 to 156 (LSELERPHKVSHGHERRDERK). 2 disordered regions span residues 79-403 (ERNA…FEQP) and 418-466 (KKKK…EKPA). Serine 196 carries the phosphoserine modification. 5 stretches are compositionally biased toward basic and acidic residues: residues 226–235 (QERHLGEPHG), 253–269 (RPVDAKSDEKASVVSRE), 275–308 (LSKEENRRPPSGDNAREKPPSSGVKKEKDREGSS), 321–343 (SDNHLKKPKHRDPEKAKLDKSKQ), and 372–384 (PEGKVKTNLDRKS). Serine 384 and serine 387 each carry phosphoserine. Threonine 394 carries the post-translational modification Phosphothreonine. Lysine 434 bears the N6-acetyllysine mark. Residues 434–443 (KGLKKNDSKS) show a composition bias toward basic and acidic residues. Serine 516 is modified (phosphoserine). Positions 522-681 (EAGFTGRRMN…PPRDVRRRQE (160 aa)) are activation domain. A BC-box region spans residues 550-559 (TLHQQCIRVL). The region spanning 566-610 (IFEVGGVPYSVLEPVLERCTPDQLYRIEEYNHVLIEETDQLWKVH) is the F-box domain. The interval 674 to 732 (RDVRRRQEKFGTGGAAVPEKIKIKPAPYPMGSSHASASSISFNPSPEEPAYDGPSTSSA) is disordered. The span at 705–714 (SSHASASSIS) shows a compositional bias: low complexity.

Heterotrimer of an A (ELOA, ELOA2 or ELOA3P), ELOB and ELOC subunit. Part of a multisubunit ubiquitin ligase complex consisting of elongin BC complex (ELOB and ELOC), elongin A/ELOA, RBX1 and CUL5. Interacts with ERCC6; the interaction is induced by DNA damaging agents or inhibitors of RNA polymerase II elongation. Interacts (via BC-box) with CUL5.

It localises to the nucleus. Functionally, SIII, also known as elongin, is a general transcription elongation factor that increases the RNA polymerase II transcription elongation past template-encoded arresting sites. Subunit A is transcriptionally active and its transcription activity is strongly enhanced by binding to the dimeric complex of the SIII regulatory subunits B and C (elongin BC complex). Its function is as follows. As part of a multisubunit complex composed of elongin BC complex (ELOB and ELOC), elongin A/ELOA, RBX1 and CUL5; polyubiquitinates monoubiquitinated POLR2A. In Homo sapiens (Human), this protein is Elongin-A.